The following is a 205-amino-acid chain: Small ribosomal subunit protein uS4 (205 aa).

The 79-residue stretch at 94–172 (SRLDSIVYRM…TTPDYVSFDV (79 aa)) folds into the S4 RNA-binding domain.

It belongs to the universal ribosomal protein uS4 family. In terms of assembly, part of the 30S ribosomal subunit. Contacts protein S5. The interaction surface between S4 and S5 is involved in control of translational fidelity.

Functionally, one of the primary rRNA binding proteins, it binds directly to 16S rRNA where it nucleates assembly of the body of the 30S subunit. In terms of biological role, with S5 and S12 plays an important role in translational accuracy. In Rickettsia bellii (strain OSU 85-389), this protein is Small ribosomal subunit protein uS4.